The sequence spans 378 residues: Anhydro-N-acetylmuramic acid kinase (378 aa).

ATP is bound at residue Gly9 to Asp16.

This sequence belongs to the anhydro-N-acetylmuramic acid kinase family.

It catalyses the reaction 1,6-anhydro-N-acetyl-beta-muramate + ATP + H2O = N-acetyl-D-muramate 6-phosphate + ADP + H(+). It functions in the pathway amino-sugar metabolism; 1,6-anhydro-N-acetylmuramate degradation. The protein operates within cell wall biogenesis; peptidoglycan recycling. Its function is as follows. Catalyzes the specific phosphorylation of 1,6-anhydro-N-acetylmuramic acid (anhMurNAc) with the simultaneous cleavage of the 1,6-anhydro ring, generating MurNAc-6-P. Is required for the utilization of anhMurNAc either imported from the medium or derived from its own cell wall murein, and thus plays a role in cell wall recycling. This is Anhydro-N-acetylmuramic acid kinase from Synechococcus elongatus (strain ATCC 33912 / PCC 7942 / FACHB-805) (Anacystis nidulans R2).